A 1770-amino-acid chain; its full sequence is Vitellogenin (1770 aa).

The signal sequence occupies residues 1-16 (MLLLLTLLLFAGTVAA). The region spanning 22-809 (WQVGNEYTYL…SEDSVIPRIL (788 aa)) is the Vitellogenin domain. The cysteines at positions 178 and 222 are disulfide-linked. N-linked (GlcNAc...) asparagine glycosylation is present at Asn296. The segment at 373-394 (SSSSSISSSEENDFWQPKPTLE) is disordered. Asn1067 is a glycosylation site (N-linked (GlcNAc...) asparagine). Residues 1442 to 1635 (TSCMLDKTRA…SYALISNQCE (194 aa)) enclose the VWFD domain. 2 cysteine pairs are disulfide-bonded: Cys1444/Cys1598 and Cys1466/Cys1634.

Accumulates in the hemolymph. Represents up to 70% of the queen's hemolymph proteins. During the first week of the worker adult life, when it becomes a nurse bee and performs brood-rearing tasks, the vitellogenin titer increases and may account for up to 40% of the total hemolymph proteins.

The protein resides in the secreted. In terms of biological role, precursor of the egg-yolk proteins that are sources of nutrients during embryonic development. Involved in the differentiation of honeybee larvae into queens. This is Vitellogenin (Vg) from Apis mellifera (Honeybee).